We begin with the raw amino-acid sequence, 98 residues long: NADH-ubiquinone oxidoreductase chain 4L (98 aa).

The next 3 helical transmembrane spans lie at Met1–Ile21, Met36–Ile56, and Leu61–Ile81.

Belongs to the complex I subunit 4L family. In terms of assembly, core subunit of respiratory chain NADH dehydrogenase (Complex I) which is composed of 45 different subunits.

It is found in the mitochondrion inner membrane. The enzyme catalyses a ubiquinone + NADH + 5 H(+)(in) = a ubiquinol + NAD(+) + 4 H(+)(out). Functionally, core subunit of the mitochondrial membrane respiratory chain NADH dehydrogenase (Complex I) which catalyzes electron transfer from NADH through the respiratory chain, using ubiquinone as an electron acceptor. Part of the enzyme membrane arm which is embedded in the lipid bilayer and involved in proton translocation. This chain is NADH-ubiquinone oxidoreductase chain 4L (MT-ND4L), found in Metachirus nudicaudatus (Brown four-eyed opossum).